Reading from the N-terminus, the 345-residue chain is Phosphate acyltransferase (345 aa).

This sequence belongs to the PlsX family. As to quaternary structure, homodimer. Probably interacts with PlsY.

The protein resides in the cytoplasm. The enzyme catalyses a fatty acyl-[ACP] + phosphate = an acyl phosphate + holo-[ACP]. It participates in lipid metabolism; phospholipid metabolism. In terms of biological role, catalyzes the reversible formation of acyl-phosphate (acyl-PO(4)) from acyl-[acyl-carrier-protein] (acyl-ACP). This enzyme utilizes acyl-ACP as fatty acyl donor, but not acyl-CoA. This Proteus mirabilis (strain HI4320) protein is Phosphate acyltransferase.